Consider the following 456-residue polypeptide: Chromosomal replication initiator protein DnaA 1 (456 aa).

A domain I, interacts with DnaA modulators region spans residues 1-68 (MRAWEEFLLL…KANLINNNGK (68 aa)). The interval 68–101 (KPIRVRVTSLDKSTPFKESQIQQEKTAYFTMQYG) is domain II. Residues 102–320 (DIDPQMSFAN…HALTTLAKRV (219 aa)) are domain III, AAA+ region. Residues serine 150, glycine 152, lysine 153, and threonine 154 each coordinate ATP. Residues 321–456 (AYKKLSHQLL…AYQSLDLIVD (136 aa)) are domain IV, binds dsDNA.

The protein belongs to the DnaA family. In terms of assembly, oligomerizes as a right-handed, spiral filament on DNA at oriC.

It is found in the cytoplasm. Plays an essential role in the initiation and regulation of chromosomal replication. ATP-DnaA binds to the origin of replication (oriC) to initiate formation of the DNA replication initiation complex once per cell cycle. Binds the DnaA box (a 9 base pair repeat at the origin) and separates the double-stranded (ds)DNA. Forms a right-handed helical filament on oriC DNA; dsDNA binds to the exterior of the filament while single-stranded (ss)DNA is stabiized in the filament's interior. The ATP-DnaA-oriC complex binds and stabilizes one strand of the AT-rich DNA unwinding element (DUE), permitting loading of DNA polymerase. After initiation quickly degrades to an ADP-DnaA complex that is not apt for DNA replication. Binds acidic phospholipids. The chain is Chromosomal replication initiator protein DnaA 1 from Chlamydia muridarum (strain MoPn / Nigg).